A 497-amino-acid polypeptide reads, in one-letter code: Glycerol kinase (497 aa).

T11 serves as a coordination point for ADP. ATP-binding residues include T11, S12, and S13. T11 is a sn-glycerol 3-phosphate binding site. R15 provides a ligand contact to ADP. Positions 81, 82, 133, and 242 each coordinate sn-glycerol 3-phosphate. Glycerol contacts are provided by R81, E82, Y133, D242, and Q243. Residues T264 and G307 each contribute to the ADP site. ATP is bound by residues T264, G307, Q311, and G412. ADP contacts are provided by G412 and N416.

Belongs to the FGGY kinase family.

The catalysed reaction is glycerol + ATP = sn-glycerol 3-phosphate + ADP + H(+). The protein operates within polyol metabolism; glycerol degradation via glycerol kinase pathway; sn-glycerol 3-phosphate from glycerol: step 1/1. With respect to regulation, inhibited by fructose 1,6-bisphosphate (FBP). Key enzyme in the regulation of glycerol uptake and metabolism. Catalyzes the phosphorylation of glycerol to yield sn-glycerol 3-phosphate. In Polaromonas naphthalenivorans (strain CJ2), this protein is Glycerol kinase.